The sequence spans 189 residues: Prostaglandin-H2 D-isomerase (189 aa).

The signal sequence occupies residues 1–24 (MATPSSLWLGLALLGTLGVLQTPA). Glutamine 25 is modified (pyrrolidone carboxylic acid). The N-linked (GlcNAc...) asparagine glycan is linked to asparagine 49. The Nucleophile role is filled by cysteine 63. A glycan (N-linked (GlcNAc...) asparagine) is linked at asparagine 76. Residues cysteine 87 and cysteine 184 are joined by a disulfide bond.

It belongs to the calycin superfamily. Lipocalin family. In terms of assembly, monomer. Abundant in the brain and CNS, where it is expressed in tissues of the blood-brain barrier and secreted into the cerebro-spinal fluid.

Its subcellular location is the rough endoplasmic reticulum. The protein localises to the nucleus membrane. The protein resides in the golgi apparatus. It localises to the cytoplasm. It is found in the perinuclear region. Its subcellular location is the secreted. It catalyses the reaction prostaglandin H2 = prostaglandin D2. Functionally, catalyzes the conversion of PGH2 to PGD2, a prostaglandin involved in smooth muscle contraction/relaxation and a potent inhibitor of platelet aggregation. Involved in a variety of CNS functions, such as sedation, NREM sleep and PGE2-induced allodynia, and may have an anti-apoptotic role in oligodendrocytes. Binds small non-substrate lipophilic molecules, including biliverdin, bilirubin, retinal, retinoic acid and thyroid hormone, and may act as a scavenger for harmful hydrophobic molecules and as a secretory retinoid and thyroid hormone transporter. Possibly involved in development and maintenance of the blood-brain, blood-retina, blood-aqueous humor and blood-testis barrier. It is likely to play important roles in both maturation and maintenance of the central nervous system and male reproductive system. Involved in PLA2G3-dependent maturation of mast cells. PLA2G3 is secreted by immature mast cells and acts on nearby fibroblasts upstream to PTDGS to synthesize PGD2, which in turn promotes mast cell maturation and degranulation via PTGDR. The protein is Prostaglandin-H2 D-isomerase (PTGDS) of Sus scrofa (Pig).